A 112-amino-acid polypeptide reads, in one-letter code: Replication initiation control protein YabA (112 aa).

His85, Cys87, Cys101, and Cys104 together coordinate Zn(2+).

It belongs to the YabA family. As to quaternary structure, homotetramer. Interacts with both DnaA and DnaN, acting as a bridge between these two proteins. The cofactor is Zn(2+).

It localises to the cytoplasm. The protein localises to the nucleoid. In terms of biological role, involved in control of chromosome replication initiation. Inhibits the cooperative binding of DnaA to the oriC region, thus negatively regulating initiation of chromosome replication. Inhibits the ability of DnaA-ATP to form a helix on DNA; does not disassemble preformed DnaA-DNA helices. Decreases the residence time of DnaA on the chromosome at its binding sites (oriC, replication forks and promoter-binding sites). Tethers DnaA to the replication machinery via the DNA polymerase beta sliding clamp subunit (dnaN). Associates with oriC and other DnaA targets on the chromosome in a DnaA-dependent manner. This chain is Replication initiation control protein YabA, found in Lacticaseibacillus casei (strain BL23) (Lactobacillus casei).